The chain runs to 291 residues: MTSSYLHFPDFDPVIFSIGPVALHWYGLMYLVGFVFAMWLAVRRANRPGSGWTKNEVENLLYAGFLGVFLGGRIGYVLFYNFPLFLDNPLYLFRVWDGGMSFHGGLIGVILVMIIFARRTKRSFFQVSDFIAPLIPFGLGAGRLGNFINGELWGRVDPDFRFAMLFPGSRAEDIALLPSHPQWQPIFDTYGVLPRHPSQLYELALEGVVLFIILNLFIRKPRPMGAVSGLFLIGYGALRIIVEFFRQPDAQFTGAWVQYISMGQILSIPMIIAGAIMMVWAYRRRPQQHVS.

Transmembrane regions (helical) follow at residues 21–41 (VALH…MWLA), 60–80 (LLYA…VLFY), 96–116 (WDGG…MIIF), 130–150 (FIAP…FING), 198–218 (SQLY…NLFI), 225–245 (GAVS…VEFF), and 260–280 (ISMG…MMVW). Arg143 contacts a 1,2-diacyl-sn-glycero-3-phospho-(1'-sn-glycerol).

Belongs to the Lgt family.

It localises to the cell inner membrane. The enzyme catalyses L-cysteinyl-[prolipoprotein] + a 1,2-diacyl-sn-glycero-3-phospho-(1'-sn-glycerol) = an S-1,2-diacyl-sn-glyceryl-L-cysteinyl-[prolipoprotein] + sn-glycerol 1-phosphate + H(+). The protein operates within protein modification; lipoprotein biosynthesis (diacylglyceryl transfer). Catalyzes the transfer of the diacylglyceryl group from phosphatidylglycerol to the sulfhydryl group of the N-terminal cysteine of a prolipoprotein, the first step in the formation of mature lipoproteins. The chain is Phosphatidylglycerol--prolipoprotein diacylglyceryl transferase from Salmonella choleraesuis (strain SC-B67).